Consider the following 428-residue polypeptide: Dihydroorotase (428 aa).

Zn(2+) contacts are provided by His60 and His62. Substrate-binding positions include 62-64 (HLR) and Asn94. Zn(2+)-binding residues include Asp152, His179, and His232. Asn278 contacts substrate. Asp305 is a Zn(2+) binding site. Asp305 is an active-site residue. Residues His309 and 323-324 (FG) each bind substrate.

Belongs to the metallo-dependent hydrolases superfamily. DHOase family. Class I DHOase subfamily. Requires Zn(2+) as cofactor.

It catalyses the reaction (S)-dihydroorotate + H2O = N-carbamoyl-L-aspartate + H(+). It participates in pyrimidine metabolism; UMP biosynthesis via de novo pathway; (S)-dihydroorotate from bicarbonate: step 3/3. In terms of biological role, catalyzes the reversible cyclization of carbamoyl aspartate to dihydroorotate. The chain is Dihydroorotase from Anoxybacillus flavithermus (strain DSM 21510 / WK1).